A 376-amino-acid chain; its full sequence is Succinyl-diaminopimelate desuccinylase (376 aa).

Histidine 66 provides a ligand contact to Zn(2+). Aspartate 68 is a catalytic residue. Residue aspartate 99 participates in Zn(2+) binding. Glutamate 133 serves as the catalytic Proton acceptor. Positions 134, 162, and 349 each coordinate Zn(2+).

The protein belongs to the peptidase M20A family. DapE subfamily. As to quaternary structure, homodimer. Zn(2+) is required as a cofactor. Co(2+) serves as cofactor.

The enzyme catalyses N-succinyl-(2S,6S)-2,6-diaminopimelate + H2O = (2S,6S)-2,6-diaminopimelate + succinate. Its pathway is amino-acid biosynthesis; L-lysine biosynthesis via DAP pathway; LL-2,6-diaminopimelate from (S)-tetrahydrodipicolinate (succinylase route): step 3/3. Functionally, catalyzes the hydrolysis of N-succinyl-L,L-diaminopimelic acid (SDAP), forming succinate and LL-2,6-diaminopimelate (DAP), an intermediate involved in the bacterial biosynthesis of lysine and meso-diaminopimelic acid, an essential component of bacterial cell walls. The sequence is that of Succinyl-diaminopimelate desuccinylase from Ruthia magnifica subsp. Calyptogena magnifica.